We begin with the raw amino-acid sequence, 321 residues long: Lipoyl synthase (321 aa).

[4Fe-4S] cluster contacts are provided by Cys68, Cys73, Cys79, Cys94, Cys98, Cys101, and Ser308. The region spanning 80-297 (FNHGTATFMI…KQEALAMGFT (218 aa)) is the Radical SAM core domain.

It belongs to the radical SAM superfamily. Lipoyl synthase family. [4Fe-4S] cluster is required as a cofactor.

It is found in the cytoplasm. The catalysed reaction is [[Fe-S] cluster scaffold protein carrying a second [4Fe-4S](2+) cluster] + N(6)-octanoyl-L-lysyl-[protein] + 2 oxidized [2Fe-2S]-[ferredoxin] + 2 S-adenosyl-L-methionine + 4 H(+) = [[Fe-S] cluster scaffold protein] + N(6)-[(R)-dihydrolipoyl]-L-lysyl-[protein] + 4 Fe(3+) + 2 hydrogen sulfide + 2 5'-deoxyadenosine + 2 L-methionine + 2 reduced [2Fe-2S]-[ferredoxin]. It functions in the pathway protein modification; protein lipoylation via endogenous pathway; protein N(6)-(lipoyl)lysine from octanoyl-[acyl-carrier-protein]: step 2/2. Functionally, catalyzes the radical-mediated insertion of two sulfur atoms into the C-6 and C-8 positions of the octanoyl moiety bound to the lipoyl domains of lipoate-dependent enzymes, thereby converting the octanoylated domains into lipoylated derivatives. This is Lipoyl synthase from Sodalis glossinidius (strain morsitans).